Reading from the N-terminus, the 509-residue chain is Inositol-3-phosphate synthase 1 (509 aa).

This sequence belongs to the myo-inositol 1-phosphate synthase family. NAD(+) is required as a cofactor. Highly expressed in anthers, but transcripts are undetectable in roots, leaves, flowers and embryos.

The protein localises to the cytoplasm. It catalyses the reaction D-glucose 6-phosphate = 1D-myo-inositol 3-phosphate. The protein operates within polyol metabolism; myo-inositol biosynthesis; myo-inositol from D-glucose 6-phosphate: step 1/2. Its function is as follows. Key enzyme in myo-inositol biosynthesis pathway that catalyzes the conversion of glucose 6-phosphate to 1-myo-inositol 1-phosphate in a NAD-dependent manner. Is a key enzyme in the phytic acid biosynthesis pathway in seeds. This Oryza sativa subsp. japonica (Rice) protein is Inositol-3-phosphate synthase 1.